The sequence spans 298 residues: Inosose dehydratase (298 aa).

The protein belongs to the IolE/MocC family. It depends on glutathione as a cofactor. Requires Co(2+) as cofactor. Mn(2+) serves as cofactor.

It carries out the reaction scyllo-inosose = 3D-3,5/4-trihydroxycyclohexane-1,2-dione + H2O. It functions in the pathway polyol metabolism; myo-inositol degradation into acetyl-CoA; acetyl-CoA from myo-inositol: step 2/7. Its function is as follows. Catalyzes the dehydration of inosose (2-keto-myo-inositol, 2KMI or 2,4,6/3,5-pentahydroxycyclohexanone) to 3D-(3,5/4)-trihydroxycyclohexane-1,2-dione (D-2,3-diketo-4-deoxy-epi-inositol). The polypeptide is Inosose dehydratase (Clostridium botulinum (strain Alaska E43 / Type E3)).